A 577-amino-acid polypeptide reads, in one-letter code: Aspartate--tRNA(Asp/Asn) ligase (577 aa).

Glutamate 171 lines the L-aspartate pocket. Residues 195–198 (QLFK) are aspartate. An L-aspartate-binding site is contributed by arginine 217. Residues 217–219 (RDE) and glutamine 226 contribute to the ATP site. Histidine 444 is an L-aspartate binding site. Glutamate 474 lines the ATP pocket. Arginine 481 is an L-aspartate binding site. Residue 526 to 529 (GFDR) coordinates ATP.

This sequence belongs to the class-II aminoacyl-tRNA synthetase family. Type 1 subfamily. As to quaternary structure, homodimer.

Its subcellular location is the cytoplasm. The enzyme catalyses tRNA(Asx) + L-aspartate + ATP = L-aspartyl-tRNA(Asx) + AMP + diphosphate. Functionally, aspartyl-tRNA synthetase with relaxed tRNA specificity since it is able to aspartylate not only its cognate tRNA(Asp) but also tRNA(Asn). Reaction proceeds in two steps: L-aspartate is first activated by ATP to form Asp-AMP and then transferred to the acceptor end of tRNA(Asp/Asn). The chain is Aspartate--tRNA(Asp/Asn) ligase from Helicobacter pylori (strain P12).